We begin with the raw amino-acid sequence, 709 residues long: ATP-dependent zinc metalloprotease FtsH (709 aa).

Over 1–25 (MKKNKGLNEATTSEKPQFPKRTAWK) the chain is Cytoplasmic. A helical transmembrane segment spans residues 26–46 (IFWWVVILAIIIGILVYILMP). At 47-171 (RATTAVIEKW…FVAPDTRARD (125 aa)) the chain is on the extracellular side. The chain crosses the membrane as a helical span at residues 172–192 (VLNIFFGLLPIIIFVIFFLLF). Topologically, residues 193 to 709 (WRSARGISGG…DTEKDSETNS (517 aa)) are cytoplasmic. 268 to 275 (GPPGTGKT) is a binding site for ATP. Histidine 490 contacts Zn(2+). Glutamate 491 is an active-site residue. Zn(2+) is bound by residues histidine 494 and aspartate 569. The tract at residues 673–709 (ILAQKQEQQAKQKAEAKEAKLNKKTEKDTEKDSETNS) is disordered. Residues 680 to 709 (QQAKQKAEAKEAKLNKKTEKDTEKDSETNS) show a composition bias toward basic and acidic residues.

This sequence in the central section; belongs to the AAA ATPase family. It in the C-terminal section; belongs to the peptidase M41 family. Homohexamer. Requires Zn(2+) as cofactor.

It is found in the cell membrane. Its function is as follows. Acts as a processive, ATP-dependent zinc metallopeptidase for both cytoplasmic and membrane proteins. Plays a role in the quality control of integral membrane proteins. The sequence is that of ATP-dependent zinc metalloprotease FtsH from Mycoplasma pneumoniae (strain ATCC 29342 / M129 / Subtype 1) (Mycoplasmoides pneumoniae).